A 146-amino-acid chain; its full sequence is Small ribosomal subunit protein uS5 (146 aa).

The S5 DRBM domain occupies 8-71 (FKEVVVNIGR…DDAFKNIIKV (64 aa)).

This sequence belongs to the universal ribosomal protein uS5 family. In terms of assembly, part of the 30S ribosomal subunit. Contacts proteins S4 and S8.

With S4 and S12 plays an important role in translational accuracy. Its function is as follows. Located at the back of the 30S subunit body where it stabilizes the conformation of the head with respect to the body. The sequence is that of Small ribosomal subunit protein uS5 from Wolinella succinogenes (strain ATCC 29543 / DSM 1740 / CCUG 13145 / JCM 31913 / LMG 7466 / NCTC 11488 / FDC 602W) (Vibrio succinogenes).